The sequence spans 486 residues: NADH-quinone oxidoreductase subunit N (486 aa).

14 helical membrane passes run 8 to 28, 38 to 58, 73 to 93, 105 to 125, 128 to 148, 169 to 189, 196 to 216, 235 to 255, 269 to 289, 304 to 324, 325 to 345, 373 to 393, 405 to 427, and 454 to 474; these read FIAL…MLAV, ATLS…VLGV, ACFY…LAHA, LYLL…AQHL, LFIG…YAFF, FLLF…FAGL, HVLS…GLGF, PAPV…AVLL, LLNI…NLLA, IAHL…AVEA, VGVY…VITL, AVMT…GFIG, HLWW…YLRV, and IMLV…QPLL.

This sequence belongs to the complex I subunit 2 family. NDH-1 is composed of 13 different subunits. Subunits NuoA, H, J, K, L, M, N constitute the membrane sector of the complex.

The protein localises to the cell inner membrane. The enzyme catalyses a quinone + NADH + 5 H(+)(in) = a quinol + NAD(+) + 4 H(+)(out). In terms of biological role, NDH-1 shuttles electrons from NADH, via FMN and iron-sulfur (Fe-S) centers, to quinones in the respiratory chain. The immediate electron acceptor for the enzyme in this species is believed to be ubiquinone. Couples the redox reaction to proton translocation (for every two electrons transferred, four hydrogen ions are translocated across the cytoplasmic membrane), and thus conserves the redox energy in a proton gradient. This Pseudomonas aeruginosa (strain ATCC 15692 / DSM 22644 / CIP 104116 / JCM 14847 / LMG 12228 / 1C / PRS 101 / PAO1) protein is NADH-quinone oxidoreductase subunit N.